The chain runs to 265 residues: Tryptophan synthase alpha chain (265 aa).

Catalysis depends on proton acceptor residues E49 and D60.

Belongs to the TrpA family. As to quaternary structure, tetramer of two alpha and two beta chains.

The enzyme catalyses (1S,2R)-1-C-(indol-3-yl)glycerol 3-phosphate + L-serine = D-glyceraldehyde 3-phosphate + L-tryptophan + H2O. It functions in the pathway amino-acid biosynthesis; L-tryptophan biosynthesis; L-tryptophan from chorismate: step 5/5. Its function is as follows. The alpha subunit is responsible for the aldol cleavage of indoleglycerol phosphate to indole and glyceraldehyde 3-phosphate. This chain is Tryptophan synthase alpha chain, found in Desulfosudis oleivorans (strain DSM 6200 / JCM 39069 / Hxd3) (Desulfococcus oleovorans).